Reading from the N-terminus, the 565-residue chain is CTP synthase (565 aa).

Residues 1–272 (MARPKNVKHI…DLRVMKKLGL (272 aa)) are amidoligase domain. CTP is bound at residue Ser-18. Ser-18 is a UTP binding site. Residue 19-24 (SLGKGI) participates in ATP binding. Tyr-59 lines the L-glutamine pocket. Asp-76 contributes to the ATP binding site. Residues Asp-76 and Glu-146 each contribute to the Mg(2+) site. Residues 153 to 155 (DIE), 193 to 198 (KTKPTQ), and Lys-229 each bind CTP. UTP contacts are provided by residues 193-198 (KTKPTQ) and Lys-229. Residues 299 to 543 (TIGVCGKYTE…VQAAKEFAMG (245 aa)) form the Glutamine amidotransferase type-1 domain. Gly-363 lines the L-glutamine pocket. The Nucleophile; for glutamine hydrolysis role is filled by Cys-390. L-glutamine contacts are provided by residues 391-394 (LGMQ), Glu-414, and Arg-471. Active-site residues include His-516 and Glu-518.

Belongs to the CTP synthase family. As to quaternary structure, homotetramer.

The enzyme catalyses UTP + L-glutamine + ATP + H2O = CTP + L-glutamate + ADP + phosphate + 2 H(+). The catalysed reaction is L-glutamine + H2O = L-glutamate + NH4(+). It carries out the reaction UTP + NH4(+) + ATP = CTP + ADP + phosphate + 2 H(+). It participates in pyrimidine metabolism; CTP biosynthesis via de novo pathway; CTP from UDP: step 2/2. Its activity is regulated as follows. Allosterically activated by GTP, when glutamine is the substrate; GTP has no effect on the reaction when ammonia is the substrate. The allosteric effector GTP functions by stabilizing the protein conformation that binds the tetrahedral intermediate(s) formed during glutamine hydrolysis. Inhibited by the product CTP, via allosteric rather than competitive inhibition. Its function is as follows. Catalyzes the ATP-dependent amination of UTP to CTP with either L-glutamine or ammonia as the source of nitrogen. Regulates intracellular CTP levels through interactions with the four ribonucleotide triphosphates. This Chlorobaculum parvum (strain DSM 263 / NCIMB 8327) (Chlorobium vibrioforme subsp. thiosulfatophilum) protein is CTP synthase.